A 254-amino-acid chain; its full sequence is Imidazole glycerol phosphate synthase subunit HisF (254 aa).

Active-site residues include Asp-13 and Asp-132.

This sequence belongs to the HisA/HisF family. Heterodimer of HisH and HisF.

The protein localises to the cytoplasm. It carries out the reaction 5-[(5-phospho-1-deoxy-D-ribulos-1-ylimino)methylamino]-1-(5-phospho-beta-D-ribosyl)imidazole-4-carboxamide + L-glutamine = D-erythro-1-(imidazol-4-yl)glycerol 3-phosphate + 5-amino-1-(5-phospho-beta-D-ribosyl)imidazole-4-carboxamide + L-glutamate + H(+). The protein operates within amino-acid biosynthesis; L-histidine biosynthesis; L-histidine from 5-phospho-alpha-D-ribose 1-diphosphate: step 5/9. Its function is as follows. IGPS catalyzes the conversion of PRFAR and glutamine to IGP, AICAR and glutamate. The HisF subunit catalyzes the cyclization activity that produces IGP and AICAR from PRFAR using the ammonia provided by the HisH subunit. This Nautilia profundicola (strain ATCC BAA-1463 / DSM 18972 / AmH) protein is Imidazole glycerol phosphate synthase subunit HisF.